We begin with the raw amino-acid sequence, 485 residues long: Probable alginate O-acetylase AlgI (485 aa).

Transmembrane regions (helical) follow at residues 7-24 (VFLF…YLSG), 39-61 (FYAW…NYWI), 78-100 (WLLL…NFGV), 115-137 (FILT…ISYI), 150-172 (NLID…VLRF), 312-334 (FLTM…WGAW), 360-382 (AFTF…HVAA), 402-424 (AQLT…FFGL), and 461-483 (ILLL…FLYF). His-322 is an active-site residue.

It belongs to the membrane-bound acyltransferase family.

It localises to the cell inner membrane. It functions in the pathway glycan biosynthesis; alginate biosynthesis. Together with AlgJ and AlgF, forms an inner membrane complex which probably interacts with the alginate polymerization-transport complex and adds acetyl groups at the O-2 and O-3 positions of mannuronate residues. Acetylation of alginate is important for the architecture of biofilms and increases the ability of alginate to act as a defense barrier. The polypeptide is Probable alginate O-acetylase AlgI (algI) (Pseudomonas putida (strain ATCC 47054 / DSM 6125 / CFBP 8728 / NCIMB 11950 / KT2440)).